A 300-amino-acid chain; its full sequence is Ribonuclease HIII (300 aa).

The RNase H type-2 domain occupies 86–300 (RSRIGVDESG…FNEVLGSGNQ (215 aa)). D92, E93, and D196 together coordinate a divalent metal cation.

Belongs to the RNase HII family. RnhC subfamily. Mn(2+) is required as a cofactor. It depends on Mg(2+) as a cofactor.

It localises to the cytoplasm. The enzyme catalyses Endonucleolytic cleavage to 5'-phosphomonoester.. Its function is as follows. Endonuclease that specifically degrades the RNA of RNA-DNA hybrids. The polypeptide is Ribonuclease HIII (Chlamydia trachomatis serovar L2 (strain ATCC VR-902B / DSM 19102 / 434/Bu)).